The following is a 581-amino-acid chain: Arginine--tRNA ligase (581 aa).

A 'HIGH' region motif is present at residues 126–136 (PNLAKEMHVGH).

It belongs to the class-I aminoacyl-tRNA synthetase family. Monomer.

It is found in the cytoplasm. The enzyme catalyses tRNA(Arg) + L-arginine + ATP = L-arginyl-tRNA(Arg) + AMP + diphosphate. The protein is Arginine--tRNA ligase of Shewanella amazonensis (strain ATCC BAA-1098 / SB2B).